We begin with the raw amino-acid sequence, 456 residues long: Chromosomal replication initiator protein DnaA 1 (456 aa).

Residues methionine 1–lysine 68 form a domain I, interacts with DnaA modulators region. The interval lysine 68–glycine 101 is domain II. The interval aspartate 102 to valine 320 is domain III, AAA+ region. Residues serine 150, glycine 152, lysine 153, and threonine 154 each coordinate ATP. Positions alanine 321–aspartate 456 are domain IV, binds dsDNA.

It belongs to the DnaA family. In terms of assembly, oligomerizes as a right-handed, spiral filament on DNA at oriC.

It is found in the cytoplasm. Plays an essential role in the initiation and regulation of chromosomal replication. ATP-DnaA binds to the origin of replication (oriC) to initiate formation of the DNA replication initiation complex once per cell cycle. Binds the DnaA box (a 9 base pair repeat at the origin) and separates the double-stranded (ds)DNA. Forms a right-handed helical filament on oriC DNA; dsDNA binds to the exterior of the filament while single-stranded (ss)DNA is stabiized in the filament's interior. The ATP-DnaA-oriC complex binds and stabilizes one strand of the AT-rich DNA unwinding element (DUE), permitting loading of DNA polymerase. After initiation quickly degrades to an ADP-DnaA complex that is not apt for DNA replication. Binds acidic phospholipids. The polypeptide is Chromosomal replication initiator protein DnaA 1 (Chlamydia muridarum (strain MoPn / Nigg)).